Consider the following 363-residue polypeptide: L-arabinitol 4-dehydrogenase (363 aa).

Zn(2+) is bound by residues C53, H78, E79, C108, C111, C114, C122, and E163. NAD(+) is bound by residues 190-191 (PI), D211, R216, I282, and 306-308 (QYR).

Belongs to the zinc-containing alcohol dehydrogenase family. As to quaternary structure, homotetramer. The cofactor is Zn(2+).

The enzyme catalyses L-arabinitol + NAD(+) = L-xylulose + NADH + H(+). It functions in the pathway carbohydrate degradation; L-arabinose degradation via L-arabinitol; D-xylulose 5-phosphate from L-arabinose (fungal route): step 2/5. In terms of biological role, catalyzes the NAD-dependent oxidation of L-arabinitol to L-xylulose in the fungal L-arabinose catabolic pathway. L-arabinose catabolism is important for using plant material as a carbon source. Not active on D-arabinitol, D-sorbitol and D-mannitol. This is L-arabinitol 4-dehydrogenase (ard-1) from Neurospora crassa (strain ATCC 24698 / 74-OR23-1A / CBS 708.71 / DSM 1257 / FGSC 987).